Consider the following 284-residue polypeptide: Syntaxin-like protein psy1 (284 aa).

Residues Glu23–Asn57 are a coiled coil. The 63-residue stretch at Leu181–Ala243 folds into the t-SNARE coiled-coil homology domain. Residues Ile260–Leu280 traverse the membrane as a helical; Anchor for type IV membrane protein segment.

It belongs to the syntaxin family.

It is found in the cell membrane. The protein localises to the prospore membrane. The chain is Syntaxin-like protein psy1 (psy1) from Schizosaccharomyces pombe (strain 972 / ATCC 24843) (Fission yeast).